We begin with the raw amino-acid sequence, 464 residues long: Fumarate hydratase class II (464 aa).

Substrate contacts are provided by residues 98–100, 129–132, 139–141, and Thr-187; these read SGT, HPND, and SSN. Catalysis depends on His-188, which acts as the Proton donor/acceptor. The active site involves Ser-318. Substrate contacts are provided by residues Ser-319 and 324-326; that span reads KVN.

Belongs to the class-II fumarase/aspartase family. Fumarase subfamily. In terms of assembly, homotetramer.

Its subcellular location is the cytoplasm. The enzyme catalyses (S)-malate = fumarate + H2O. It functions in the pathway carbohydrate metabolism; tricarboxylic acid cycle; (S)-malate from fumarate: step 1/1. In terms of biological role, involved in the TCA cycle. Catalyzes the stereospecific interconversion of fumarate to L-malate. This chain is Fumarate hydratase class II, found in Haemophilus ducreyi (strain 35000HP / ATCC 700724).